The sequence spans 595 residues: MSMPLPMKLRTRLFLSISALITVSLFGLLLGLFSVMQLGRAQEQRMSHHYATIEVSQQLRQLLGDQLVILLRETPDGQALERSQNDFRRVLEQGRANTVDSAEQAALDGVRDAYLQLQAHTPALLEAPMVDNDGFSEAFNGLRLRLQDLQQLALAGISDAETSARHRAYLVAGLLGLVGVAILLIGFVTAHSIARRFGAPIETLARAADRIGEGDFDVTLPMTNVAEVGQLTRRFGLMAEALRQYRKTSVEEVLSGERRLQAVLDSIDDGLVIFDNQGRIEHANPVAIRQLFVSNDPHGKRIDEILSDVDVQEAVEKALLGEVQDEAMPDLVVDVAGESRLLAWSLYPVTHPGGHSVGAVLVVRDVTEQRAFERVRSEFVLRASHELRTPVTGMQMAFSLLRERLDFPAESREADLIQTVDEEMSRLVLLINDLLNFSRYQTGMQKLELASCDLVDLLTQAQQRFIPKGEARRVSLQLELGDELPRLQLDRLQIERVIDNLLENALRHSSEGGQIHLQARRQGDRVLIAVEDNGEGIPFSQQGRIFEPFVQVGRKKGGAGLGLELCKEIIQLHGGRIAVRSQPGQGARFYMLLPV.

At 1 to 12 the chain is on the cytoplasmic side; the sequence is MSMPLPMKLRTR. The chain crosses the membrane as a helical span at residues 13–33; it reads LFLSISALITVSLFGLLLGLF. Topologically, residues 34–167 are periplasmic; the sequence is SVMQLGRAQE…SDAETSARHR (134 aa). The helical transmembrane segment at 168–188 threads the bilayer; the sequence is AYLVAGLLGLVGVAILLIGFV. The Cytoplasmic portion of the chain corresponds to 189 to 595; that stretch reads TAHSIARRFG…GARFYMLLPV (407 aa). Residues 195 to 247 form the HAMP domain; it reads RRFGAPIETLARAADRIGEGDFDVTLPMTNVAEVGQLTRRFGLMAEALRQYRK. The region spanning 258–323 is the PAS domain; the sequence is RRLQAVLDSI…AVEKALLGEV (66 aa). Residues 327–369 form the PAC domain; that stretch reads AMPDLVVDVAGESRLLAWSLYPVTHPGGHSVGAVLVVRDVTEQ. The 214-residue stretch at 382 to 595 folds into the Histidine kinase domain; that stretch reads RASHELRTPV…GARFYMLLPV (214 aa). His385 bears the Phosphohistidine; by autocatalysis mark.

In terms of processing, autophosphorylated.

It is found in the cell inner membrane. The catalysed reaction is ATP + protein L-histidine = ADP + protein N-phospho-L-histidine.. In terms of biological role, member of the two-component regulatory system AlgB/KinB involved in regulation of alginate biosynthesis genes. KinB functions as a membrane-associated protein kinase that phosphorylates AlgB, probably in response to environmental signals. The polypeptide is Alginate biosynthesis sensor protein KinB (kinB) (Pseudomonas aeruginosa).